The chain runs to 300 residues: Tubulin polyglutamylase complex subunit 2 (300 aa).

Positions lysine 257–lysine 300 are disordered. Positions proline 276–lysine 300 are enriched in low complexity.

As to quaternary structure, part of the neuronal tubulin polyglutamylase complex which contains TPGS1, TPGS2, TTLL1, LRRC49 and NICN1. Interacts with CSTPP1 and LRRC49.

It is found in the cytoplasm. The protein resides in the cytoskeleton. It localises to the microtubule organizing center. Its subcellular location is the centrosome. The protein localises to the centriolar satellite. Functionally, subunit of the tubulin polyglutamylase complex (TPGC). The complex mediates cilia and flagella polyglutamylation which is essential for their biogenesis and motility. The sequence is that of Tubulin polyglutamylase complex subunit 2 (TPGS2) from Homo sapiens (Human).